Consider the following 223-residue polypeptide: Cytidylate kinase (223 aa).

10-18 lines the ATP pocket; the sequence is GPAGSGKSS.

Belongs to the cytidylate kinase family. Type 1 subfamily.

It is found in the cytoplasm. The enzyme catalyses CMP + ATP = CDP + ADP. It catalyses the reaction dCMP + ATP = dCDP + ADP. This is Cytidylate kinase from Pseudothermotoga lettingae (strain ATCC BAA-301 / DSM 14385 / NBRC 107922 / TMO) (Thermotoga lettingae).